Reading from the N-terminus, the 501-residue chain is Glycerol kinase (501 aa).

T17 contributes to the ADP binding site. Residues T17, T18, and S19 each coordinate ATP. A sn-glycerol 3-phosphate-binding site is contributed by T17. R21 is a binding site for ADP. Residues R87, E88, Y139, and D243 each contribute to the sn-glycerol 3-phosphate site. Glycerol is bound by residues R87, E88, Y139, D243, and Q244. The ADP site is built by T265 and G308. ATP is bound by residues T265, G308, Q312, and G409. ADP is bound by residues G409 and N413.

The protein belongs to the FGGY kinase family.

It carries out the reaction glycerol + ATP = sn-glycerol 3-phosphate + ADP + H(+). It functions in the pathway polyol metabolism; glycerol degradation via glycerol kinase pathway; sn-glycerol 3-phosphate from glycerol: step 1/1. With respect to regulation, inhibited by fructose 1,6-bisphosphate (FBP). In terms of biological role, key enzyme in the regulation of glycerol uptake and metabolism. Catalyzes the phosphorylation of glycerol to yield sn-glycerol 3-phosphate. The polypeptide is Glycerol kinase (Pseudomonas fluorescens (strain SBW25)).